Reading from the N-terminus, the 261-residue chain is Serine/arginine-rich splicing factor 12 (261 aa).

The 79-residue stretch at 10 to 88 folds into the RRM domain; the sequence is TSLFIRNVAD…RQIEIQFAQG (79 aa). The interval 86–261 is disordered; sequence AQGDRKTPGQ…SRSYRHKNSW (176 aa). A compositionally biased stretch (basic and acidic residues) spans 88-109; sequence GDRKTPGQMKSKERHPCSPSDH. Composition is skewed to basic residues over residues 110-122 and 178-191; these read RRSR…RTRS and GRSR…RSKS. Over residues 192 to 209 the composition is skewed to low complexity; sequence IGKSQSSSPQKQTSSGTK. Residues 230-239 are compositionally biased toward polar residues; it reads GYTNSETKVQ. A compositionally biased stretch (basic residues) spans 240–261; the sequence is TAKHSHFRSHSRSRSYRHKNSW.

This sequence belongs to the splicing factor SR family. In terms of tissue distribution, expressed in testis.

Its subcellular location is the nucleus. Splicing factor that seems to antagonize SR proteins in pre-mRNA splicing regulation. The polypeptide is Serine/arginine-rich splicing factor 12 (SRSF12) (Homo sapiens (Human)).